Reading from the N-terminus, the 359-residue chain is Alpha-2-HS-glycoprotein (359 aa).

Positions 1 to 18 (MKSFVLLFCLAQLWGCHS) are cleaved as a signal peptide. A Cystatin fetuin-A-type 1 domain is found at 27-133 (YKEPACDDPD…QFSVLFTKCD (107 aa)). Cystine bridges form between Cys32-Cys350, Cys89-Cys100, Cys114-Cys132, Cys146-Cys149, Cys208-Cys219, and Cys230-Cys248. N-linked (GlcNAc...) asparagine glycosylation occurs at Asn99. Residues Ser134, Ser135, and Ser138 each carry the phosphoserine modification. Residues 144-256 (KLCPDCPLLA…TCTLFQTQPV (113 aa)) form the Cystatin fetuin-A-type 2 domain. Asn156 and Asn176 each carry an N-linked (GlcNAc...) asparagine glycan. The interval 257-285 (IPQPQPDGAEAEAPSAVPDAAGPTPSAAG) is disordered. An O-linked (GalNAc...) serine glycan is attached at Ser271. Over residues 276-285 (AAGPTPSAAG) the composition is skewed to low complexity. Thr280 carries an O-linked (GalNAc...) threonine glycan. Ser282 and Ser296 each carry an O-linked (GalNAc...) serine glycan. Position 314 is a phosphothreonine (Thr314). A phosphoserine mark is found at Ser316, Ser320, Ser323, and Ser325. O-linked (GalNAc...) threonine glycosylation is present at Thr334. An O-linked (GalNAc...) serine; partial glycan is attached at Ser341.

The protein belongs to the fetuin family. In terms of processing, phosphorylated by FAM20C in the extracellular medium. As to expression, liver and bone.

The protein localises to the secreted. In terms of biological role, promotes endocytosis, possesses opsonic properties and influences the mineral phase of bone. Suggested to have lymphocyte stimulating properties, lipid binding capability and to bind thyroid hormone. The protein is Alpha-2-HS-glycoprotein (AHSG) of Bos taurus (Bovine).